Consider the following 72-residue polypeptide: Large ribosomal subunit protein bL31 (72 aa).

Residues C16, C18, C38, and C41 each coordinate Zn(2+).

It belongs to the bacterial ribosomal protein bL31 family. Type A subfamily. As to quaternary structure, part of the 50S ribosomal subunit. Zn(2+) is required as a cofactor.

Functionally, binds the 23S rRNA. The sequence is that of Large ribosomal subunit protein bL31 from Azoarcus sp. (strain BH72).